The following is an 82-amino-acid chain: Small ribosomal subunit protein bTHXm (82 aa).

Residues 1–22 (MAMRLAAAAAFVRRLVPARNPV) constitute a mitochondrion transit peptide. Positions 34–56 (RGDKKTKRGKRFKGSYGNARPKR) are disordered. The span at 37 to 46 (KKTKRGKRFK) shows a compositional bias: basic residues.

This sequence belongs to the bacterial ribosomal protein bTHX family.

The protein resides in the mitochondrion. The chain is Small ribosomal subunit protein bTHXm from Oryza sativa subsp. japonica (Rice).